Consider the following 314-residue polypeptide: WD repeat domain-containing protein 83 (314 aa).

7 WD repeats span residues C23–T62, G65–K104, G107–I146, E151–D188, Y189–E228, G231–K272, and V275–G313.

It belongs to the WD repeat MORG1 family.

It localises to the cytoplasm. Its function is as follows. Molecular scaffold protein for various multimeric protein complexes. Acts as a module in the assembly of a multicomponent scaffold for the ERK pathway, linking ERK responses to specific agonists. Also involved in response to hypoxia by acting as a negative regulator of HIF1A/HIF-1-alpha. This chain is WD repeat domain-containing protein 83 (wdr83), found in Xenopus laevis (African clawed frog).